The primary structure comprises 310 residues: 1-aminocyclopropane-1-carboxylate oxidase 1 (310 aa).

A coiled-coil region spans residues 113–133 (EELSKTMDEYVCQLHKFAERL). Residues 158–259 (PAFGTKVAKY…RLSIATFYNP (102 aa)) form the Fe2OG dioxygenase domain. Residues histidine 182, aspartate 184, and histidine 240 each contribute to the Fe cation site. Arginine 250 is a binding site for 2-oxoglutarate.

This sequence belongs to the iron/ascorbate-dependent oxidoreductase family. Requires Fe(2+) as cofactor.

The enzyme catalyses 1-aminocyclopropane-1-carboxylate + L-ascorbate + O2 = ethene + L-dehydroascorbate + hydrogen cyanide + CO2 + 2 H2O. It participates in alkene biosynthesis; ethylene biosynthesis via S-adenosyl-L-methionine; ethylene from S-adenosyl-L-methionine: step 2/2. Functionally, enzyme involved in the ethylene biosynthesis. May promote stem elongation by maximizing the extensibility cells, possibly by activating ethylene biosynthesis, in response to very-long-chain fatty acids (VLCFAs C20:0 to C30:0). In Arabidopsis thaliana (Mouse-ear cress), this protein is 1-aminocyclopropane-1-carboxylate oxidase 1 (ACO1).